Here is a 493-residue protein sequence, read N- to C-terminus: Cardiolipin synthase 1 (493 aa).

Helical transmembrane passes span 13–33 (FTII…IIIF) and 45–65 (WAWL…YLFF). 2 PLD phosphodiesterase domains span residues 228–255 (MNNR…GDEY) and 406–433 (ENGF…DFRS). Active-site residues include His-233, Lys-235, Asp-240, His-411, Lys-413, and Asp-418.

Belongs to the phospholipase D family. Cardiolipin synthase subfamily.

It is found in the cell membrane. It carries out the reaction 2 a 1,2-diacyl-sn-glycero-3-phospho-(1'-sn-glycerol) = a cardiolipin + glycerol. Functionally, catalyzes the reversible phosphatidyl group transfer from one phosphatidylglycerol molecule to another to form cardiolipin (CL) (diphosphatidylglycerol) and glycerol. This is Cardiolipin synthase 1 (cls1) from Staphylococcus aureus (strain COL).